The following is a 183-amino-acid chain: ATP synthase subunit delta (183 aa).

Belongs to the ATPase delta chain family. F-type ATPases have 2 components, F(1) - the catalytic core - and F(0) - the membrane proton channel. F(1) has five subunits: alpha(3), beta(3), gamma(1), delta(1), epsilon(1). F(0) has three main subunits: a(1), b(2) and c(10-14). The alpha and beta chains form an alternating ring which encloses part of the gamma chain. F(1) is attached to F(0) by a central stalk formed by the gamma and epsilon chains, while a peripheral stalk is formed by the delta and b chains.

Its subcellular location is the cell inner membrane. Its function is as follows. F(1)F(0) ATP synthase produces ATP from ADP in the presence of a proton or sodium gradient. F-type ATPases consist of two structural domains, F(1) containing the extramembraneous catalytic core and F(0) containing the membrane proton channel, linked together by a central stalk and a peripheral stalk. During catalysis, ATP synthesis in the catalytic domain of F(1) is coupled via a rotary mechanism of the central stalk subunits to proton translocation. In terms of biological role, this protein is part of the stalk that links CF(0) to CF(1). It either transmits conformational changes from CF(0) to CF(1) or is implicated in proton conduction. The protein is ATP synthase subunit delta of Nitratidesulfovibrio vulgaris (strain ATCC 29579 / DSM 644 / CCUG 34227 / NCIMB 8303 / VKM B-1760 / Hildenborough) (Desulfovibrio vulgaris).